The following is a 242-amino-acid chain: Probable transcriptional regulatory protein LBA0733 (242 aa).

Residues 1-22 (MSGHSKWHNIQGRKNAQDAKRG) are disordered.

The protein belongs to the TACO1 family.

It is found in the cytoplasm. This chain is Probable transcriptional regulatory protein LBA0733, found in Lactobacillus acidophilus (strain ATCC 700396 / NCK56 / N2 / NCFM).